Consider the following 224-residue polypeptide: Flagellar L-ring protein (224 aa).

The first 15 residues, Met1–Gly15, serve as a signal peptide directing secretion. Residue Cys16 is the site of N-palmitoyl cysteine attachment. The S-diacylglycerol cysteine moiety is linked to residue Cys16.

The protein belongs to the FlgH family. In terms of assembly, the basal body constitutes a major portion of the flagellar organelle and consists of four rings (L,P,S, and M) mounted on a central rod.

The protein resides in the cell outer membrane. It is found in the bacterial flagellum basal body. Functionally, assembles around the rod to form the L-ring and probably protects the motor/basal body from shearing forces during rotation. The sequence is that of Flagellar L-ring protein from Trichlorobacter lovleyi (strain ATCC BAA-1151 / DSM 17278 / SZ) (Geobacter lovleyi).